Here is a 556-residue protein sequence, read N- to C-terminus: Arginine--tRNA ligase (556 aa).

The 'HIGH' region signature appears at 132–142 (ANPTGDLHLGH).

It belongs to the class-I aminoacyl-tRNA synthetase family. Monomer.

It is found in the cytoplasm. The enzyme catalyses tRNA(Arg) + L-arginine + ATP = L-arginyl-tRNA(Arg) + AMP + diphosphate. This is Arginine--tRNA ligase (argS) from Bacillus subtilis (strain 168).